The primary structure comprises 157 residues: DNA gyrase inhibitor (157 aa).

It belongs to the DNA gyrase inhibitor family. In terms of assembly, interacts with DNA gyrase.

It localises to the cytoplasm. Inhibits the supercoiling activity of DNA gyrase. Acts by inhibiting DNA gyrase at an early step, prior to (or at the step of) binding of DNA by the gyrase. It protects cells against toxins that target DNA gyrase, by inhibiting activity of these toxins and reducing the formation of lethal double-strand breaks in the cell. The sequence is that of DNA gyrase inhibitor from Klebsiella pneumoniae (strain 342).